The primary structure comprises 142 residues: Hemoglobin subunit alpha (142 aa).

The 141-residue stretch at 2–142 (VLSPADKTNV…VSTVLTSKYR (141 aa)) folds into the Globin domain. Ser-4 is modified (phosphoserine). An N6-succinyllysine modification is found at Lys-8. Position 9 is a phosphothreonine (Thr-9). Lys-12 is subject to N6-succinyllysine. Lys-17 carries the N6-acetyllysine; alternate modification. Lys-17 carries the post-translational modification N6-succinyllysine; alternate. At Tyr-25 the chain carries Phosphotyrosine. Phosphoserine is present on Ser-36. Residue Lys-41 is modified to N6-succinyllysine. Phosphoserine is present on Ser-50. An O2-binding site is contributed by His-59. Position 88 (His-88) interacts with heme b. Ser-103 bears the Phosphoserine mark. Position 109 is a phosphothreonine (Thr-109). A Phosphoserine modification is found at Ser-125. Thr-135 and Thr-138 each carry phosphothreonine. Phosphoserine is present on Ser-139.

It belongs to the globin family. As to quaternary structure, heterotetramer of two alpha chains and two beta chains. As to expression, red blood cells.

Involved in oxygen transport from the lung to the various peripheral tissues. Its function is as follows. Hemopressin acts as an antagonist peptide of the cannabinoid receptor CNR1. Hemopressin-binding efficiently blocks cannabinoid receptor CNR1 and subsequent signaling. The sequence is that of Hemoglobin subunit alpha (HBA) from Ailurus fulgens (Himalayan red panda).